We begin with the raw amino-acid sequence, 248 residues long: 2,3-bisphosphoglycerate-dependent phosphoglycerate mutase (248 aa).

Residues 8-15 (RHGESQWN), 21-22 (TG), Arg-60, 87-90 (ERHY), Lys-98, 114-115 (RR), and 183-184 (GN) contribute to the substrate site. His-9 (tele-phosphohistidine intermediate) is an active-site residue. Glu-87 serves as the catalytic Proton donor/acceptor.

It belongs to the phosphoglycerate mutase family. BPG-dependent PGAM subfamily. As to quaternary structure, homodimer.

It catalyses the reaction (2R)-2-phosphoglycerate = (2R)-3-phosphoglycerate. It functions in the pathway carbohydrate degradation; glycolysis; pyruvate from D-glyceraldehyde 3-phosphate: step 3/5. Catalyzes the interconversion of 2-phosphoglycerate and 3-phosphoglycerate. This chain is 2,3-bisphosphoglycerate-dependent phosphoglycerate mutase, found in Teredinibacter turnerae (strain ATCC 39867 / T7901).